The chain runs to 293 residues: MPEPIQSGDDALRVSVLSEALPYIQRFSGRRIVIKYGGAAMAHAELREAVFRDLALLACVGVQPVVVHGGGPEINQWLKRLEIPAEFRDGLRVTDADTMDVVEMVLVGRVNKQIVNGLNQLGTRAVGLSGSDGSLVEARPWGDGSHGLVGDVARVNPDVLEPLLERGYVPVISSVAATPGDGRAHNINADTVAGELAAALEAEKLILLTDTPGILRDRDNPNSLIRKLRLSEARQLIDDGVVAGGMTPKTECCIRALAQGVSAAHIVDGRVPHALLLEVFTDAGIGTMVVGRG.

Substrate is bound by residues Gly70–Gly71, Arg92, and Asn186.

The protein belongs to the acetylglutamate kinase family. ArgB subfamily.

Its subcellular location is the cytoplasm. The enzyme catalyses N-acetyl-L-glutamate + ATP = N-acetyl-L-glutamyl 5-phosphate + ADP. The protein operates within amino-acid biosynthesis; L-arginine biosynthesis; N(2)-acetyl-L-ornithine from L-glutamate: step 2/4. In terms of biological role, catalyzes the ATP-dependent phosphorylation of N-acetyl-L-glutamate. This is Acetylglutamate kinase from Parasynechococcus marenigrum (strain WH8102).